The chain runs to 466 residues: Carboxy-terminal processing protease CtpA (466 aa).

Residues 1–36 (MKRQLKLFFIVLITAVVASALTLFITGNSSILGQKS) form the signal peptide. Residues 96-174 (DETISASFEG…TKVKLELNRA (79 aa)) enclose the PDZ domain. Residues serine 297, glutamate 308, and lysine 322 each act as charge relay system in the active site.

The protein belongs to the peptidase S41A family.

The enzyme catalyses The enzyme shows specific recognition of a C-terminal tripeptide, Xaa-Yaa-Zaa, in which Xaa is preferably Ala or Leu, Yaa is preferably Ala or Tyr, and Zaa is preferably Ala, but then cleaves at a variable distance from the C-terminus. A typical cleavage is -Ala-Ala-|-Arg-Ala-Ala-Lys-Glu-Asn-Tyr-Ala-Leu-Ala-Ala.. The chain is Carboxy-terminal processing protease CtpA (ctpA) from Bacillus subtilis (strain 168).